The following is a 426-amino-acid chain: 3-phosphoshikimate 1-carboxyvinyltransferase (426 aa).

3-phosphoshikimate-binding residues include Lys23, Ser24, and Arg28. Position 23 (Lys23) interacts with phosphoenolpyruvate. Phosphoenolpyruvate is bound by residues Gly96 and Arg124. Positions 170, 171, 172, 198, 314, and 341 each coordinate 3-phosphoshikimate. Phosphoenolpyruvate is bound at residue Gln172. Asp314 acts as the Proton acceptor in catalysis. Phosphoenolpyruvate contacts are provided by Arg345, Arg386, and Lys411.

The protein belongs to the EPSP synthase family. In terms of assembly, monomer.

It is found in the cytoplasm. It catalyses the reaction 3-phosphoshikimate + phosphoenolpyruvate = 5-O-(1-carboxyvinyl)-3-phosphoshikimate + phosphate. It functions in the pathway metabolic intermediate biosynthesis; chorismate biosynthesis; chorismate from D-erythrose 4-phosphate and phosphoenolpyruvate: step 6/7. In terms of biological role, catalyzes the transfer of the enolpyruvyl moiety of phosphoenolpyruvate (PEP) to the 5-hydroxyl of shikimate-3-phosphate (S3P) to produce enolpyruvyl shikimate-3-phosphate and inorganic phosphate. This is 3-phosphoshikimate 1-carboxyvinyltransferase from Nostoc punctiforme (strain ATCC 29133 / PCC 73102).